We begin with the raw amino-acid sequence, 121 residues long: Large ribosomal subunit protein bL17 (121 aa).

The protein belongs to the bacterial ribosomal protein bL17 family. As to quaternary structure, part of the 50S ribosomal subunit. Contacts protein L32.

This is Large ribosomal subunit protein bL17 from Mycoplasmopsis agalactiae (strain NCTC 10123 / CIP 59.7 / PG2) (Mycoplasma agalactiae).